The primary structure comprises 345 residues: Biotin synthase (345 aa).

The Radical SAM core domain maps to 67 to 295 (YKVQLASLLS…KSRIRLSAGR (229 aa)). 3 residues coordinate [4Fe-4S] cluster: C82, C86, and C89. [2Fe-2S] cluster contacts are provided by C126, C158, C218, and R290.

The protein belongs to the radical SAM superfamily. Biotin synthase family. As to quaternary structure, homodimer. [4Fe-4S] cluster is required as a cofactor. The cofactor is [2Fe-2S] cluster.

It catalyses the reaction (4R,5S)-dethiobiotin + (sulfur carrier)-SH + 2 reduced [2Fe-2S]-[ferredoxin] + 2 S-adenosyl-L-methionine = (sulfur carrier)-H + biotin + 2 5'-deoxyadenosine + 2 L-methionine + 2 oxidized [2Fe-2S]-[ferredoxin]. It functions in the pathway cofactor biosynthesis; biotin biosynthesis; biotin from 7,8-diaminononanoate: step 2/2. In terms of biological role, catalyzes the conversion of dethiobiotin (DTB) to biotin by the insertion of a sulfur atom into dethiobiotin via a radical-based mechanism. This is Biotin synthase from Prochlorococcus marinus (strain NATL1A).